We begin with the raw amino-acid sequence, 773 residues long: Transducin-like enhancer protein 4 (773 aa).

Disordered regions lie at residues 1-22 (MIRDLSKMYPQTRHPAPHQPAQ), 140-162 (HGHGLPVPLTPHPSGLQPPAIPP), and 182-357 (LPIK…DPLA). Residues 1 to 136 (MIRDLSKMYP…AIIGQQLQAQ (136 aa)) are q domain. The interval 137–204 (HLSHGHGLPV…HQRDRDSIKS (68 aa)) is GP domain. Residues 183–202 (PIKDEKKHHDNDHQRDRDSI) are compositionally biased toward basic and acidic residues. Low complexity predominate over residues 203-214 (KSSSVSPSASFR). Positions 205–274 (SSVSPSASFR…SPRGSPAHSP (70 aa)) are ccN domain. 4 positions are modified to phosphoserine: Ser208, Ser212, Ser216, and Ser222. The span at 215 to 252 (GSEKHRNSTDYSSESKKQKTEEKEIAARYDSDGEKSDD) shows a compositional bias: basic and acidic residues. Lys237 bears the N6-acetyllysine mark. Ser245 carries the phosphoserine modification. Ser250 bears the Phosphoserine; by CK2 mark. A Phosphoserine; by CDK1 modification is found at Ser265. 2 positions are modified to phosphoserine: Ser269 and Ser273. Basic and acidic residues predominate over residues 273-289 (SPRENGLDKTRLLKKDA). Residues 275–452 (RENGLDKTRL…PGGKPAYSFH (178 aa)) are SP domain. Lys281 carries the N6-acetyllysine modification. A compositionally biased stretch (low complexity) spans 290-305 (PISPASVASSSSTPSS). Ser292 is modified (phosphoserine). A compositionally biased stretch (polar residues) spans 317–328 (TTPVSKSNTPTP). Thr318 is subject to Phosphothreonine. A phosphoserine mark is found at Ser321 and Ser323. Phosphothreonine is present on residues Thr325, Thr327, Thr334, and Thr340. The residue at position 419 (Ser419) is a Phosphoserine. WD repeat units lie at residues 485 to 523 (NHGEVVCAVTISNPTRHVYTGGKGCVKVWDISHPGNKSP), 531 to 570 (NRDNYIRSCRLLPDGRTLIVGGEASTLSIWDLAAPTPRIK), 575 to 614 (SSAPACYALAISPDSKVCFSCCSDGNIAVWDLHNQTLVRQ), 617 to 656 (GHTDGASCIDISNDGTKLWTGGLDNTVRSWDLREGRQLQQ), 658 to 697 (DFTSQIFSLGYCPTGEWLAVGMENSNVEVLHVTKPDKYQL), 699 to 738 (LHESCVLSLKFAHCGKWFVSTGKDNLLNAWRTPYGASIFQ), and 740 to 773 (KESSSVLSCDISVDDKYIVTGSGDKKATVYEVIY).

Belongs to the WD repeat Groucho/TLE family. Homooligomer and heterooligomer with other family members. Interacts with PAX5. Interacts with LEF1, TCF7, TCF7L1 and TCF7L2. Interacts with ZNF703; TLE4 may mediate ZNF703 transcriptional repression. Interacts with SIX3 and SIX6. Interacts with PAX2. Interacts with TLE1. Post-translationally, phosphorylated. PAX5 binding increases phosphorylation. In terms of processing, ubiquitinated by XIAP/BIRC4. As to expression, expressed in bone marrow-derived macrophages.

It is found in the nucleus. Transcriptional corepressor that binds to a number of transcription factors. Inhibits the transcriptional activation mediated by PAX5, and by CTNNB1 and TCF family members in Wnt signaling. The effects of full-length TLE family members may be modulated by association with dominant-negative AES. Essential for the transcriptional repressor activity of SIX3 during retina and lens development and for SIX3 transcriptional auto-repression. Involved in transcriptional repression of GNRHR and enhances MSX1-mediated transcriptional repression of CGA/alpha-GSU. The sequence is that of Transducin-like enhancer protein 4 (Tle4) from Mus musculus (Mouse).